The chain runs to 258 residues: MDDVLISYCVVTGSFLGFQLLFSAISPRLFTKYSSTYRQLSFGKQCEWDSRFVSTNHALIVGSACLYILAYDDAVNADPIWGDPFWVKMNVAITCGYLVQDLLLLARFWKVMRDPYMVCHHLAVFYSYGYVLNRGVLPYFANFRLISELSTPFVNQRWFFDVIGKPRSSWPVLLNGLAMALVFFIVRIAVIPSYYSQVFATFGTEGYIRLGIGPQVAWIVSCVVLDILNVFWMYKIARGFYKVVKAKPDGKPRRNHAD.

6 helical membrane passes run 5–25, 52–72, 85–105, 116–132, 171–191, and 212–232; these read LISYCVVTGSFLGFQLLFSAI, FVSTNHALIVGSACLYILAYD, FWVKMNVAITCGYLVQDLLLL, YMVCHHLAVFYSYGYVL, PVLLNGLAMALVFFIVRIAVI, and IGPQVAWIVSCVVLDILNVFW. One can recognise a TLC domain in the interval 43–245; it reads GKQCEWDSRF…IARGFYKVVK (203 aa).

It belongs to the TLCD4 family.

The protein localises to the membrane. This chain is TLC domain-containing protein 4-A (tlcd4-a), found in Xenopus laevis (African clawed frog).